Here is a 190-residue protein sequence, read N- to C-terminus: MELILGSQSSARANLLKEHGIEFEQKALYFDEESLKTTDPREFVYLACKGKLEKAKELLANNRTIVVADSVVSVGNRMQRKAKNRQEAFEFLKRQNGHEIEVLTCSALISPALEWLDLSVFRARLKAFDPSEMEKYLESGLWQESAGCVRLEDFHKPYIKSLSENLSVGLGLNVEGLLGVLKLGAKLSSL.

D69 (proton acceptor) is an active-site residue.

The protein belongs to the Maf family. The cofactor is a divalent metal cation.

It localises to the cytoplasm. It catalyses the reaction a ribonucleoside 5'-triphosphate + H2O = a ribonucleoside 5'-phosphate + diphosphate + H(+). The catalysed reaction is a 2'-deoxyribonucleoside 5'-triphosphate + H2O = a 2'-deoxyribonucleoside 5'-phosphate + diphosphate + H(+). Its function is as follows. Nucleoside triphosphate pyrophosphatase. May have a dual role in cell division arrest and in preventing the incorporation of modified nucleotides into cellular nucleic acids. This chain is Nucleoside triphosphate pyrophosphatase, found in Helicobacter pylori (strain Shi470).